The primary structure comprises 665 residues: Prelamin-A/C (665 aa).

The residue at position 1 (Met1) is an N-acetylmethionine. The disordered stretch occupies residues 1–27; the sequence is METPSQRRPTRSGAQASSTPLSPTRIT. Residues 1–33 form a head region; sequence METPSQRRPTRSGAQASSTPLSPTRITRLQEKE. The segment at 1 to 130 is interaction with MLIP; the sequence is METPSQRRPT…TKKEGDLLAA (130 aa). Position 3 is a phosphothreonine (Thr3). Ser5 is subject to Phosphoserine. Residue Thr10 is modified to Phosphothreonine. Phosphoserine occurs at positions 12 and 18. Residue Thr19 is modified to Phosphothreonine. A Phosphoserine modification is found at Ser22. One can recognise an IF rod domain in the interval 31–387; it reads EKEDLQELND…KLLEGEEERL (357 aa). N6-acetyllysine; alternate is present on Lys32. Lys32 carries the N6-succinyllysine; alternate modification. Lys32 is covalently cross-linked (Glycyl lysine isopeptide (Lys-Gly) (interchain with G-Cter in SUMO2); alternate). The tract at residues 34-70 is coil 1A; that stretch reads DLQELNDRLAVYIDRVRSLETENAGLRLRITESEEVV. Ser51, Ser66, and Ser71 each carry phosphoserine. The tract at residues 71 to 80 is linker 1; that stretch reads SREVSGIKAA. Lys78 and Lys97 each carry N6-acetyllysine. The tract at residues 81 to 218 is coil 1B; it reads YEAELGDARK…NIYSEELRET (138 aa). Residue Lys97 forms a Glycyl lysine isopeptide (Lys-Gly) (interchain with G-Cter in SUMO2) linkage. Ser107 is subject to Phosphoserine. An N6-acetyllysine mark is found at Lys108, Lys114, Lys123, Lys135, Lys144, and Lys155. Lys171 carries the N6-acetyllysine; alternate modification. Lys171 is subject to N6-succinyllysine; alternate. Residue Lys171 forms a Glycyl lysine isopeptide (Lys-Gly) (interchain with G-Cter in SUMO2); alternate linkage. Lys180, Lys201, and Lys208 each carry N6-acetyllysine. Lys201 is covalently cross-linked (Glycyl lysine isopeptide (Lys-Gly) (interchain with G-Cter in SUMO2); alternate). Lys201 participates in a covalent cross-link: Glycyl lysine isopeptide (Lys-Gly) (interchain with G-Cter in SUMO); alternate. Lys208 participates in a covalent cross-link: Glycyl lysine isopeptide (Lys-Gly) (interchain with G-Cter in SUMO2). Phosphoserine is present on Ser212. Residues Lys219 and Lys233 each participate in a glycyl lysine isopeptide (Lys-Gly) (interchain with G-Cter in SUMO2) cross-link. The linker 2 stretch occupies residues 219 to 242; it reads KRRHETRLVEIDNGKQREFESRLA. 4 positions are modified to N6-acetyllysine: Lys233, Lys260, Lys265, and Lys270. The tract at residues 243–383 is coil 2; it reads DALQELRAQH…HAYRKLLEGE (141 aa). Lys260 is covalently cross-linked (Glycyl lysine isopeptide (Lys-Gly) (interchain with G-Cter in SUMO2); alternate). Lys270 participates in a covalent cross-link: Glycyl lysine isopeptide (Lys-Gly) (interchain with G-Cter in SUMO2); alternate. 4 positions are modified to phosphoserine: Ser277, Ser282, Ser301, and Ser307. A Glycyl lysine isopeptide (Lys-Gly) (interchain with G-Cter in SUMO2); alternate cross-link involves residue Lys311. Lys311, Lys316, and Lys341 each carry N6-acetyllysine. Residues Lys366 and Lys378 each participate in a glycyl lysine isopeptide (Lys-Gly) (interchain with G-Cter in SUMO2) cross-link. The segment at 384 to 442 is disordered; the sequence is EERLRLSPSPTSQRSRGRASSHSSQSQGGGSVTKKRKLESSESRSSFSQHARTSGRVAV. The segment at 384-665 is tail; sequence EERLRLSPSP…TQSSQNCSIM (282 aa). Ser390, Ser392, Ser395, Ser398, Ser403, Ser404, Ser406, Ser407, Ser409, and Ser414 each carry phosphoserine. Over residues 395 to 409 the composition is skewed to low complexity; sequence SQRSRGRASSHSSQS. Thr416 is modified (phosphothreonine). Residue Lys417 is modified to N6-acetyllysine. Residues Lys417 and Lys420 each participate in a glycyl lysine isopeptide (Lys-Gly) (interchain with G-Cter in SUMO2) cross-link. Residues 417–422 carry the Nuclear localization signal motif; the sequence is KKRKLE. Phosphoserine occurs at positions 423, 426, 429, and 431. The 118-residue stretch at 428 to 545 folds into the LTD domain; sequence SSFSQHARTS…EEVAMRKLVR (118 aa). Lys450 is covalently cross-linked (Glycyl lysine isopeptide (Lys-Gly) (interchain with G-Cter in SUMO2); alternate). An N6-acetyllysine mark is found at Lys450 and Lys457. A phosphoserine mark is found at Ser458 and Ser463. Residues Lys470 and Lys486 each participate in a glycyl lysine isopeptide (Lys-Gly) (interchain with G-Cter in SUMO2) cross-link. Lys486 bears the N6-acetyllysine mark. The residue at position 496 (Thr496) is a Phosphothreonine. Ser500 is modified (phosphoserine). Thr505 and Thr510 each carry phosphothreonine. The residue at position 546 (Ser546) is a Phosphoserine. The residue at position 548 (Thr548) is a Phosphothreonine. Acidic residues predominate over residues 552 to 561; the sequence is DNDDEEEDGD. Residues 552-577 form a disordered region; that stretch reads DNDDEEEDGDELLHHHRGSHCSSSGD. A phosphoserine mark is found at Ser570 and Ser573. Lys599 participates in a covalent cross-link: Glycyl lysine isopeptide (Lys-Gly) (interchain with G-Cter in SUMO2); alternate. Residue Lys599 forms a Glycyl lysine isopeptide (Lys-Gly) (interchain with G-Cter in SUMO1); alternate linkage. Phosphoserine occurs at positions 613, 614, 617, and 620. O-linked (GlcNAc) serine glycosylation is found at Ser626 and Ser629. A phosphoserine mark is found at Ser629, Ser633, Ser637, and Ser653. The propeptide at 648 to 662 is removed in Lamin-A/C form; that stretch reads LLGNSSPRTQSSQNC. A Cysteine methyl ester modification is found at Cys662. Cys662 carries the S-farnesyl cysteine lipid modification. Residues 663-665 constitute a propeptide, removed in Prelamin-A/C form and in Lamin-A/C form; sequence SIM.

The protein belongs to the intermediate filament family. Homodimer of lamin A and lamin C. Lamin dimers then assemble into dimeric head-to-tail polymers. Ultimately, two head-to-tail polymers assemble laterally into a protofilament with a uniformly shaped rod of 3.5 nm in diameter. Interacts with lamin-associated polypeptides IA, IB and TMPO-alpha, RB1 and with emerin. Interacts with SREBF1, SREBF2, SUN2 and TMEM43. Interacts with TMEM201. Proteolytically processed isoform A interacts with NARF. Interacts with SUN1. Interacts with MLIP. Interacts with DMPK; may regulate nuclear envelope stability. Interacts with SUV39H1; the interaction increases stability of SUV39H1. Interacts with SYNE2. Interacts with ITSN1 isoform 2. Interacts with IFFO1; enables the formation of an interior nucleoskeleton that is recruited to DNA double-strand breaks. In terms of assembly, interacts with EMD. As to quaternary structure, interacts (via C-terminus) with LEMD2 (via N-terminus) (in vitro). Post-translationally, proteolytic cleavage of the C-terminal of 18 residues of prelamin-A/C results in the production of lamin-A/C. The prelamin-A/C maturation pathway includes farnesylation of CAAX motif by protein farnesyltransferase (FNTA and FNTB), removal of the last three amino acids (-AAX) by RCE1/FACE2 and/or ZMPSTE24, methylation of the C-terminal cysteine by ICMT and endoproteolytic removal of the last 15 C-terminal amino acids by ZMPSTE24. Proteolytic cleavage requires prior farnesylation and methylation, and absence of these blocks cleavage. Farnesylation of prelamin-A/C facilitates nuclear envelope targeting. In terms of processing, phosphorylation plays a key role in lamin organization, subcellular localization and nuclear envelope disintegration. Phosphorylation by CDK1 at Ser-22 and Ser-392 at the onset of mitosis drives lamin disassembly and nuclear envelope breakdown. Phosphorylation at Ser-22 and Ser-392 during interphase promotes localization to the nucleoplasm and regulates lamina assembly. Phosphorylation at Ser-22, Ser-392 and Ser-629 during interphase causes redistribution between the nucleus and the cytoplasm. Phosphorylation at Ser-22 by CDK1 regulates matrix stiffness. Phosphorylation status of Ser-22 determines its localization between double-strand break (DSB) sites and the nuclear matrix. Phosphorylated by ATR at Ser-282 in response to DNA damage, leading to lamin disassembly and nuclear envelope rupture. Phosphorylation also regulates stability in micronuclei arising from genome instability: phosphorylation at Ser-395 by ATR in response to genome instability and double-stranded DNA breaks primes LMNA for subsequent phosphorylation at Ser-392 by CDK1 and micronuclei envelope rupture. The rupture of micronuclear envelope triggers the cGAS-STING pathway thereby activating the type I interferon response and innate immunity. Post-translationally, acetylation by KAT8 is required for nuclear architecture. Sumoylation is necessary for the localization to the nuclear envelope.

It is found in the nucleus lamina. The protein localises to the nucleus envelope. Its subcellular location is the nucleus. The protein resides in the nucleoplasm. It localises to the nucleus matrix. Functionally, lamins are intermediate filament proteins that assemble into a filamentous meshwork, and which constitute the major components of the nuclear lamina, a fibrous layer on the nucleoplasmic side of the inner nuclear membrane. Lamins provide a framework for the nuclear envelope, bridging the nuclear envelope and chromatin, thereby playing an important role in nuclear assembly, chromatin organization, nuclear membrane and telomere dynamics. Lamin A and C also regulate matrix stiffness by conferring nuclear mechanical properties. The structural integrity of the lamina is strictly controlled by the cell cycle, as seen by the disintegration and formation of the nuclear envelope in prophase and telophase, respectively. Lamin A and C are present in equal amounts in the lamina of mammals. Also invoved in DNA repair: recruited by DNA repair proteins XRCC4 and IFFO1 to the DNA double-strand breaks (DSBs) to prevent chromosome translocation by immobilizing broken DNA ends. Required for normal development of peripheral nervous system and skeletal muscle and for muscle satellite cell proliferation. Required for osteoblastogenesis and bone formation. Also prevents fat infiltration of muscle and bone marrow, helping to maintain the volume and strength of skeletal muscle and bone. Required for cardiac homeostasis. In terms of biological role, prelamin-A/C can accelerate smooth muscle cell senescence. It acts to disrupt mitosis and induce DNA damage in vascular smooth muscle cells (VSMCs), leading to mitotic failure, genomic instability, and premature senescence. The sequence is that of Prelamin-A/C (Lmna) from Rattus norvegicus (Rat).